A 364-amino-acid polypeptide reads, in one-letter code: O-methyltransferase 1 (364 aa).

Residues Ser183, Gly207, Asp230, Asp250, and Lys264 each coordinate S-adenosyl-L-homocysteine. Asp230 is a binding site for S-adenosyl-L-methionine. His268 functions as the Proton acceptor in the catalytic mechanism.

Belongs to the class I-like SAM-binding methyltransferase superfamily. Cation-independent O-methyltransferase family. Homodimer.

It carries out the reaction dopamine + S-adenosyl-L-methionine = 3-methoxytyramine + S-adenosyl-L-homocysteine + H(+). The enzyme catalyses 3,4-dihydroxy-5-methoxyphenethylamine + S-adenosyl-L-methionine = 4-hydroxy-3,5-dimethoxyphenethylamine + S-adenosyl-L-homocysteine + H(+). Its pathway is aromatic compound metabolism. The protein operates within alkaloid biosynthesis. Its function is as follows. O-methyltransferase participating in the biosynthesis of natural products derived from phenylethylamine, including mescaline, a natural hallucinogen potentially used in psychotherapeutic treatments. Catalyzes the O-methylation of mescaline meta hydroxyl groups, using dopamine and 3,4-dihydroxy-5-methoxyphenethylamine as substrates. In Lophophora williamsii (Peyote), this protein is O-methyltransferase 1.